The sequence spans 868 residues: Receptor-like protein kinase At5g59670 (868 aa).

An N-terminal signal peptide occupies residues 1 to 22 (MESSFGLLLALLTLTIIHIVQA). Topologically, residues 23-500 (QDPQGFISLD…PRLIKPPKKE (478 aa)) are extracellular. Residues N38, N94, N141, N287, N300, N372, N405, N416, N423, N445, N464, and N471 are each glycosylated (N-linked (GlcNAc...) asparagine). 3 LRR repeats span residues 409-432 (PPRI…AIQS), 433-459 (ITQL…KMKS), and 461-481 (SVIN…LRKK). A helical transmembrane segment spans residues 501 to 521 (FPVAIVTLVVFVTVIVVLFLV). The Cytoplasmic portion of the chain corresponds to 522 to 868 (FRKKMSTIVK…LDTTAVPMAR (347 aa)). A Phosphothreonine modification is found at T555. The Protein kinase domain occupies 564–834 (KNFQRVLGKG…SMSQVIHELK (271 aa)). Residues 570-578 (LGKGGFGMV) and K592 each bind ATP. Phosphotyrosine is present on Y637. D689 (proton acceptor) is an active-site residue. S723 carries the phosphoserine modification. 2 positions are modified to phosphothreonine: T724 and T729.

This sequence belongs to the protein kinase superfamily. Ser/Thr protein kinase family. Post-translationally, autophosphorylated on Tyr and Thr residues.

The protein resides in the cell membrane. It carries out the reaction L-seryl-[protein] + ATP = O-phospho-L-seryl-[protein] + ADP + H(+). The enzyme catalyses L-threonyl-[protein] + ATP = O-phospho-L-threonyl-[protein] + ADP + H(+). It catalyses the reaction L-tyrosyl-[protein] + ATP = O-phospho-L-tyrosyl-[protein] + ADP + H(+). Functionally, probable receptor with a dual specificity kinase activity acting on both serine/threonine- and tyrosine-containing substrates. This chain is Receptor-like protein kinase At5g59670, found in Arabidopsis thaliana (Mouse-ear cress).